The following is a 365-amino-acid chain: MTITGIIAEFNPFHNGHKYLLDQAEGLKIVAMSGNFMQRGEPAIVDKWTRAQMALENGADLVVELPFLVSVQAADFFGQGAVDILDRLGIDSLVFGTEEVLDYQKIADLYTEKGAEMEKFVKNLPDSLSYPQKTQAMWKEFAGLDFSGNTPNHVLALAYAKAVAGRNIKLHPIQRQGAGYHSVNKDVDFASATALRQHQKDQDFLERFMPSVALFEQASKVIWEDYFPLLRYQILSNPDLTTIYQVNQEMAVRIKEAIKTAQSVEELVELVTTKRYTKARVRRLLTYILVQARENVLPEAIHVLGFTEKGRQHLKSLKGQVNLVSRIGKEPWDAMTQKVDQIYQLGKPSIAEQNFGRVPIRIETN.

Residues 7–20 (IAEF…HKYL), Gly96, Asn152, and Arg175 contribute to the ATP site.

The protein belongs to the TmcAL family.

Its subcellular location is the cytoplasm. It carries out the reaction cytidine(34) in elongator tRNA(Met) + acetate + ATP = N(4)-acetylcytidine(34) in elongator tRNA(Met) + AMP + diphosphate. In terms of biological role, catalyzes the formation of N(4)-acetylcytidine (ac(4)C) at the wobble position of elongator tRNA(Met), using acetate and ATP as substrates. First activates an acetate ion to form acetyladenylate (Ac-AMP) and then transfers the acetyl group to tRNA to form ac(4)C34. The sequence is that of tRNA(Met) cytidine acetate ligase from Streptococcus pneumoniae (strain P1031).